The chain runs to 429 residues: UDP-N-acetylglucosamine 1-carboxyvinyltransferase 2 (429 aa).

22–23 (KN) provides a ligand contact to phosphoenolpyruvate. A UDP-N-acetyl-alpha-D-glucosamine-binding site is contributed by Arg93. Residue Cys117 is the Proton donor of the active site. Residue Cys117 is modified to 2-(S-cysteinyl)pyruvic acid O-phosphothioketal. Residues 122–126 (RPIDQ), Asp305, and Ile327 each bind UDP-N-acetyl-alpha-D-glucosamine.

It belongs to the EPSP synthase family. MurA subfamily.

Its subcellular location is the cytoplasm. It catalyses the reaction phosphoenolpyruvate + UDP-N-acetyl-alpha-D-glucosamine = UDP-N-acetyl-3-O-(1-carboxyvinyl)-alpha-D-glucosamine + phosphate. It participates in cell wall biogenesis; peptidoglycan biosynthesis. Cell wall formation. Adds enolpyruvyl to UDP-N-acetylglucosamine. The chain is UDP-N-acetylglucosamine 1-carboxyvinyltransferase 2 from Bacillus cereus (strain ATCC 14579 / DSM 31 / CCUG 7414 / JCM 2152 / NBRC 15305 / NCIMB 9373 / NCTC 2599 / NRRL B-3711).